The following is a 509-amino-acid chain: Metal transporter Nramp3 (509 aa).

Positions 1–12 are enriched in low complexity; the sequence is MPQLENNEPLLI. Residues 1–25 form a disordered region; that stretch reads MPQLENNEPLLINEEEEEETAYDET. A compositionally biased stretch (acidic residues) spans 13 to 23; the sequence is NEEEEEETAYD. 12 helical membrane passes run 56–76, 84–104, 133–153, 165–185, 193–213, 239–259, 285–305, 327–347, 383–403, 406–426, 444–464, and 472–492; these read LWLF…PGNL, AVAG…GLLV, MVLW…EVIG, ILPL…FLFL, LEAV…WMFG, AVGV…SALV, IALF…AKGF, YGGG…AAGQ, IIPT…LDVL, WLNV…LCLV, IAWL…LEFF, and VYTG…LYLI.

This sequence belongs to the NRAMP (TC 2.A.55) family. Expressed in vascular tissues.

Its subcellular location is the vacuole membrane. Functionally, vacuolar metal transporter involved in intracellular metal homeostasis. Can transport iron (Fe), manganese (Mn) and cadmium (Cd). Regulates metal accumulation under Fe starvation. Acts redundantly with NRAMP4 to mobilize vacuolar Fe and provide sufficient Fe during seed germination. In association with NRAMP4, required for optimal growth and photosynthesis under Mn deficiency. Exports Mn from vacuoles in leaf mesophyll cells, making Mn available for functional photosystem II in chloroplasts. Involved in basal resistance to the bacterial pathogen E.chrysanthemi. The protein is Metal transporter Nramp3 (NRAMP3) of Arabidopsis thaliana (Mouse-ear cress).